A 215-amino-acid chain; its full sequence is MADLFLDKILVKNNRDQDELDTEREIWERLENRVILLFFAKSRSSQCQEFAPLLKDFFVRLTDEFYVDRSSQLALVYVSLDQSEEEQERFLKDMPKRWLFVPFKDEEFRRNLEAQFSVSRVPVLVVLKPSGHVISFNAVDEVVRLGPPCFKNWQEVSEIIDRSFLLPEFTDDRAGRSMTDPIRRIKYKDETTNEKKKRKHCDDEDEGGGGGTEFF.

Positions Met1–Leu165 constitute a Thioredoxin; atypical domain. Basic and acidic residues predominate over residues Ile185 to Glu194. A disordered region spans residues Ile185–Phe215.

This sequence belongs to the nucleoredoxin family.

Its subcellular location is the cell projection. The protein localises to the cilium. It localises to the photoreceptor outer segment. Plays an important role in retinal cone photoreceptor survival. May play a role in cone cell viability, slowing down cone degeneration, does not seem to play a role in degenerating rods. This is Nucleoredoxin-like protein 1 (nxnl1) from Xenopus laevis (African clawed frog).